A 96-amino-acid chain; its full sequence is Large ribosomal subunit protein bL25 (96 aa).

It belongs to the bacterial ribosomal protein bL25 family. In terms of assembly, part of the 50S ribosomal subunit; part of the 5S rRNA/L5/L18/L25 subcomplex. Contacts the 5S rRNA. Binds to the 5S rRNA independently of L5 and L18.

Functionally, this is one of the proteins that binds to the 5S RNA in the ribosome where it forms part of the central protuberance. The protein is Large ribosomal subunit protein bL25 of Buchnera aphidicola subsp. Schizaphis graminum (strain Sg).